Here is a 289-residue protein sequence, read N- to C-terminus: Protease HtpX (289 aa).

Helical transmembrane passes span 7–27 (LFLL…NIIF) and 38–58 (GGIL…SLFM). His-144 lines the Zn(2+) pocket. Glu-145 is an active-site residue. His-148 is a binding site for Zn(2+). Transmembrane regions (helical) follow at residues 155 to 175 (VTMT…SRII) and 194 to 214 (LVFW…ATMI). Residue Glu-223 participates in Zn(2+) binding.

This sequence belongs to the peptidase M48B family. Zn(2+) serves as cofactor.

Its subcellular location is the cell inner membrane. This is Protease HtpX from Actinobacillus pleuropneumoniae serotype 5b (strain L20).